The sequence spans 657 residues: N-acetylgalactosaminyltransferase 7 (657 aa).

Over 1–6 (MRLKIG) the chain is Cytoplasmic. The chain crosses the membrane as a helical; Signal-anchor for type II membrane protein span at residues 7 to 29 (FILRSLLVVGSFLGLVVLWSSLT). At 30–657 (PRPDDPSPLS…KWEMNNIHSV (628 aa)) the chain is on the lumenal side. Residues 31 to 66 (RPDDPSPLSRMREDRDVNDPMPNRGGNGLAPGEDRF) form a disordered region. Disulfide bonds link cysteine 197/cysteine 435, cysteine 426/cysteine 507, cysteine 545/cysteine 562, cysteine 585/cysteine 600, and cysteine 625/cysteine 640. Residues 206–317 (LLTSSVVIVF…VNWYAPLVAP (112 aa)) form a catalytic subdomain A region. Aspartate 247 and arginine 277 together coordinate substrate. Residues aspartate 301 and histidine 303 each contribute to the Mn(2+) site. The catalytic subdomain B stretch occupies residues 381-443 (PYRSPAMAGG…PCSRVGHIYR (63 aa)). Tryptophan 412 is a binding site for substrate. Mn(2+) is bound at residue histidine 440. Arginine 443 contributes to the substrate binding site. In terms of domain architecture, Ricin B-type lectin spans 532–652 (VDWGEIRGFE…SKTTQKWEMN (121 aa)).

The protein belongs to the glycosyltransferase 2 family. GalNAc-T subfamily. Requires Mn(2+) as cofactor.

The protein localises to the golgi apparatus membrane. The enzyme catalyses L-seryl-[protein] + UDP-N-acetyl-alpha-D-galactosamine = a 3-O-[N-acetyl-alpha-D-galactosaminyl]-L-seryl-[protein] + UDP + H(+). It carries out the reaction L-threonyl-[protein] + UDP-N-acetyl-alpha-D-galactosamine = a 3-O-[N-acetyl-alpha-D-galactosaminyl]-L-threonyl-[protein] + UDP + H(+). It participates in protein modification; protein glycosylation. In terms of biological role, glycopeptide transferase involved in O-linked oligosaccharide biosynthesis, which catalyzes the transfer of an N-acetyl-D-galactosamine residue to an already glycosylated peptide. In contrast to other proteins of the family, it does not act as a peptide transferase that transfers GalNAc onto serine or threonine residue on the protein receptor, but instead requires the prior addition of a GalNAc on a peptide before adding additional GalNAc moieties. Some peptide transferase activity is however not excluded, considering that its appropriate peptide substrate may remain unidentified. This Pongo abelii (Sumatran orangutan) protein is N-acetylgalactosaminyltransferase 7 (GALNT7).